The following is a 305-amino-acid chain: Tyrosine recombinase XerC (305 aa).

The region spanning 1–94 (MSSVDEFLTY…ACRSYYAWLL (94 aa)) is the Core-binding (CB) domain. The 178-residue stretch at 115-292 (KLPQVLDADE…DFQHLAKVYD (178 aa)) folds into the Tyr recombinase domain. Active-site residues include Arg154, Lys178, His244, Arg247, and His270. The O-(3'-phospho-DNA)-tyrosine intermediate role is filled by Tyr279.

This sequence belongs to the 'phage' integrase family. XerC subfamily. Forms a cyclic heterotetrameric complex composed of two molecules of XerC and two molecules of XerD.

It is found in the cytoplasm. Its function is as follows. Site-specific tyrosine recombinase, which acts by catalyzing the cutting and rejoining of the recombining DNA molecules. The XerC-XerD complex is essential to convert dimers of the bacterial chromosome into monomers to permit their segregation at cell division. It also contributes to the segregational stability of plasmids. The chain is Tyrosine recombinase XerC from Xanthomonas axonopodis pv. citri (strain 306).